The following is a 398-amino-acid chain: Lysophospholipid acyltransferase LPEAT1 (398 aa).

The segment at Met-1–Leu-24 is disordered. Ser-28 carries the phosphoserine modification. The helical transmembrane segment at Leu-66–Leu-86 threads the bilayer. Positions Arg-158–Glu-185 are disordered. The span at Asp-163–Asn-174 shows a compositional bias: polar residues. Positions His-194 to Asp-199 match the HXXXXD motif motif.

It belongs to the 1-acyl-sn-glycerol-3-phosphate acyltransferase family.

Its subcellular location is the endoplasmic reticulum membrane. The catalysed reaction is a 1-acyl-sn-glycero-3-phosphoethanolamine + an acyl-CoA = a 1,2-diacyl-sn-glycero-3-phosphoethanolamine + CoA. The enzyme catalyses a 1-acyl-sn-glycero-3-phosphate + an acyl-CoA = a 1,2-diacyl-sn-glycero-3-phosphate + CoA. It carries out the reaction a 1-acyl-sn-glycero-3-phosphocholine + an acyl-CoA = a 1,2-diacyl-sn-glycero-3-phosphocholine + CoA. It catalyses the reaction a 1-acyl-sn-glycero-3-phospho-L-serine + an acyl-CoA = a 1,2-diacyl-sn-glycero-3-phospho-L-serine + CoA. It participates in lipid metabolism; phospholipid metabolism. In terms of biological role, possesses acyl-CoA-dependent lysophospholipid acyltransferase activity with a subset of lysophospholipids as substrates. Exhibits strong acylation activity on lysophosphatidylethanolamine (LPE) and lysophosphatidate (LPA), and lower activity on lysophosphatidylcholine (LPC) and lysophosphatidylserine (LPS). Exhibits acylation activity on both LPE and LPC. Has a preference for 18:1-LPE over 16:0-LPE as acceptor. Palmitoyl-CoA (16:0-CoA) is a better acyl donor than oleoyl-CoA (18:1-CoA). Among several different acyl-CoA species the best acyl donor is palmitoyl-CoA (16:0-CoA). Activity is calcium-independent. Its activity is essential for maintaining adequate levels of phosphatidylethanolamine (PE), LPE and LPC in the cells, which is crucial for plant growth regulation. This is Lysophospholipid acyltransferase LPEAT1 from Arabidopsis thaliana (Mouse-ear cress).